Reading from the N-terminus, the 248-residue chain is Probable transcriptional regulatory protein FTW_1073 (248 aa).

This sequence belongs to the TACO1 family.

It is found in the cytoplasm. The sequence is that of Probable transcriptional regulatory protein FTW_1073 from Francisella tularensis subsp. tularensis (strain WY96-3418).